A 438-amino-acid chain; its full sequence is Carboxypeptidase A6 (438 aa).

Residues 1–30 form the signal peptide; that stretch reads MNFLGNPRSHTAAFLPVCWLLLNILKPGHC. The propeptide at 31–129 is activation peptide; the sequence is HSYDNRYAGD…NSLQTQRNRR (99 aa). N-linked (GlcNAc...) asparagine glycans are attached at residues N89 and N153. In terms of domain architecture, Peptidase M14 spans 138 to 433; it reads VYHSLEDIQS…LAVKNITMHL (296 aa). 2 residues coordinate Zn(2+): H197 and E200. Substrate-binding positions include 197 to 200, R255, and 272 to 273; these read HARE and NR. C266 and C289 are oxidised to a cystine. Residue H325 coordinates Zn(2+). Residue 326–327 participates in substrate binding; it reads AY. N-linked (GlcNAc...) asparagine glycosylation is present at N344. Y377 contributes to the substrate binding site. The Proton donor/acceptor role is filled by E399. The N-linked (GlcNAc...) asparagine glycan is linked to N428.

It belongs to the peptidase M14 family. Requires Zn(2+) as cofactor. In terms of tissue distribution, in brain, highly expressed in the olfactory bulb with lower levels in other regions including cerebral cortex, hippocampus, hypothalamus, striatum and medulla. Within the olfactory bulb, highest levels occur in the mitral and granular layers with lower levels in the internal and external plexiform layers. Moderate levels are found in the epididymis with low levels in colon and spleen. Not detected in adrenal, liver, lung, ovary or testis. At embryonic day 14.5, enriched in eye, ear, osteoblasts, stomach, skin, dorsal root ganglia and throughout the CNS.

It is found in the secreted. Its subcellular location is the extracellular space. The protein resides in the extracellular matrix. In terms of biological role, may be involved in the proteolytic inactivation of enkephalins and neurotensin in some brain areas. May convert inactive angiotensin I into the biologically active angiotensin II. Releases a C-terminal amino acid, with preference for large hydrophobic C-terminal amino acids and shows only very weak activity toward small amino acids and histidine. This chain is Carboxypeptidase A6 (Cpa6), found in Mus musculus (Mouse).